Reading from the N-terminus, the 235-residue chain is MIYAGILAGGTGTRMGISNLPKQFLELGDRPILIHTIEKFVLEPSIEKIVVGVHGDWVSHAEDLVDKYLPLYKERIIITKGGADRNTSIKKIIEAIDAYRPLTPEDIVVTHDSVRPFITLRMIQDNIQLAQNHDAVDTVVEAVDTIVESTNGQFITDIPNRAHLYQGQTPQTFRCKDFMDLYGSLSDEEKEILTDACKIFVIKGKDVALAKGEYSNLKITTVTDLKIAKSMIEKD.

CTP is bound by residues L7–G10, G82–S88, and S113.

This sequence belongs to the IspD/TarI cytidylyltransferase family. TarI subfamily.

It catalyses the reaction D-ribitol 5-phosphate + CTP + H(+) = CDP-L-ribitol + diphosphate. Its pathway is cell wall biogenesis; poly(ribitol phosphate) teichoic acid biosynthesis. Catalyzes the transfer of the cytidylyl group of CTP to D-ribitol 5-phosphate. This is Ribitol-5-phosphate cytidylyltransferase from Streptococcus pneumoniae serotype 19F (strain G54).